The primary structure comprises 101 residues: Gamma-secretase subunit PEN-2 (101 aa).

The Cytoplasmic segment spans residues Met-1–Lys-17. Positions Tyr-18–Trp-36 form an intramembrane region, helical. At Phe-37 to Val-57 the chain is on the cytoplasmic side. The chain crosses the membrane as a helical span at residues Trp-58 to Phe-78. At Gln-79–Pro-101 the chain is on the lumenal side.

Belongs to the PEN-2 family. In terms of assembly, the functional gamma-secretase complex is composed of at least four polypeptides: a presenilin homodimer (PSEN1 or PSEN2), nicastrin (NCSTN), APH1 (APH1A or APH1B) and PSENEN.

The protein localises to the endoplasmic reticulum membrane. Its subcellular location is the golgi apparatus. The protein resides in the golgi stack membrane. It is found in the cell membrane. It localises to the membrane. Essential subunit of the gamma-secretase complex, an endoprotease complex that catalyzes the intramembrane cleavage of integral membrane proteins such as Notch receptors and APP (amyloid-beta precursor protein). The gamma-secretase complex plays a role in Notch and Wnt signaling cascades and regulation of downstream processes via its role in processing key regulatory proteins, and by regulating cytosolic CTNNB1 levels. PSENEN modulates both endoproteolysis of presenilin and gamma-secretase activity. The sequence is that of Gamma-secretase subunit PEN-2 (Psenen) from Mus musculus (Mouse).